Reading from the N-terminus, the 145-residue chain is MRCEWEGCQEEIGDNVRGHLLSHIEKDEEARCLWKDCARYGEAQASKHALLAHARRHTGERPFECHLCGKDYTRSDPLKKHLLRHEAVDSKNENLIRKIEYLGQLLAEYRRESLRIMNDIESIRYNIQAMSRKIAYETKGNKSSL.

The segment at 35-57 (KDCARYGEAQASKHALLAHARRH) adopts a C2H2-type 1; atypical zinc-finger fold. A C2H2-type 2 zinc finger spans residues 63 to 85 (FECHLCGKDYTRSDPLKKHLLRH).

This is Zinc finger C2H2 protein ECU06_1150 from Encephalitozoon cuniculi (strain GB-M1) (Microsporidian parasite).